The following is a 156-amino-acid chain: ATP synthase subunit b (156 aa).

The chain crosses the membrane as a helical span at residues 1–21 (MSINATLLIQIIAFVLLIWFV).

Belongs to the ATPase B chain family. As to quaternary structure, F-type ATPases have 2 components, F(1) - the catalytic core - and F(0) - the membrane proton channel. F(1) has five subunits: alpha(3), beta(3), gamma(1), delta(1), epsilon(1). F(0) has three main subunits: a(1), b(2) and c(10-14). The alpha and beta chains form an alternating ring which encloses part of the gamma chain. F(1) is attached to F(0) by a central stalk formed by the gamma and epsilon chains, while a peripheral stalk is formed by the delta and b chains.

It is found in the cell inner membrane. Functionally, f(1)F(0) ATP synthase produces ATP from ADP in the presence of a proton or sodium gradient. F-type ATPases consist of two structural domains, F(1) containing the extramembraneous catalytic core and F(0) containing the membrane proton channel, linked together by a central stalk and a peripheral stalk. During catalysis, ATP synthesis in the catalytic domain of F(1) is coupled via a rotary mechanism of the central stalk subunits to proton translocation. In terms of biological role, component of the F(0) channel, it forms part of the peripheral stalk, linking F(1) to F(0). In Hydrogenovibrio crunogenus (strain DSM 25203 / XCL-2) (Thiomicrospira crunogena), this protein is ATP synthase subunit b.